The chain runs to 1323 residues: PAS domain-containing serine/threonine-protein kinase (1323 aa).

An N-acetylmethionine modification is found at M1. The residue at position 19 (S19) is a Phosphoserine. Residues 20 to 47 (LPLPVSAEGPAAQTTAEPSRSFSSAHRH) form a disordered region. The span at 31 to 43 (AQTTAEPSRSFSS) shows a compositional bias: polar residues. Residue T34 is modified to Phosphothreonine. PAS domains follow at residues 119–190 (SSPL…MEAD) and 335–402 (YRAS…SLQL). Phosphoserine is present on S582. The segment at 837 to 857 (AASDRESPGHVPSTLDAGPED) is disordered. S939 is modified (phosphoserine). Residues 999–1251 (YSTMSPLGSG…LEKLVTDPWV (253 aa)) form the Protein kinase domain. Residues 1005 to 1013 (LGSGAFGFV), K1028, and 1082 to 1089 (EKHGSGLD) contribute to the ATP site. D1128 serves as the catalytic Proton acceptor. Residue D1146 participates in ATP binding. A phosphothreonine; by autocatalysis mark is found at T1161 and T1165. A disordered region spans residues 1298 to 1323 (CGGPVPGEAPNGQGCLHPGDPRLLTS).

It belongs to the protein kinase superfamily. CAMK Ser/Thr protein kinase family. Post-translationally, autophosphorylated on Thr-1161 and Thr-1165. Autophosphorylation is activated by phospholipids. Ubiquitously expressed, with slightly higher expression in brain, prostate and testis. Reduced expression was found in placenta. Present in germ cells of testis and in the midpiece of sperm tails (at protein level).

The protein resides in the cytoplasm. It localises to the nucleus. It carries out the reaction L-seryl-[protein] + ATP = O-phospho-L-seryl-[protein] + ADP + H(+). The catalysed reaction is L-threonyl-[protein] + ATP = O-phospho-L-threonyl-[protein] + ADP + H(+). Its activity is regulated as follows. Protein kinase activity is inhibited by the first PAS domain: binding of an unidentified ligand desinhibits the protein kinase activity. May be activated by autophosphorylation on Thr-1161 and Thr-1165. The activating role of autophosphorylation at Thr-1161 is unclear: according to a report, autophosphorylation at Thr-1161 does not play a major role in activation. Autophosphorylation is enhanced upon phosphatidylinositol monophosphate (phosphatidylinositol 4-phosphate) binding and inhibited upon phosphatidylinositol bi- and tri-phosphate binding. In contrast, phosphorylation of target proteins is inhibited upon all phosphatidylinositol-binding (phosphatidylinositol mono- bi- and tri-phosphate). In terms of biological role, serine/threonine-protein kinase involved in energy homeostasis and protein translation. Phosphorylates EEF1A1, GYS1, PDX1 and RPS6. Probably plays a role under changing environmental conditions (oxygen, glucose, nutrition), rather than under standard conditions. Acts as a sensor involved in energy homeostasis: regulates glycogen synthase synthesis by mediating phosphorylation of GYS1, leading to GYS1 inactivation. May be involved in glucose-stimulated insulin production in pancreas and regulation of glucagon secretion by glucose in alpha cells; however such data require additional evidences. May play a role in regulation of protein translation by phosphorylating EEF1A1, leading to increase translation efficiency. May also participate in respiratory regulation. This chain is PAS domain-containing serine/threonine-protein kinase (PASK), found in Homo sapiens (Human).